We begin with the raw amino-acid sequence, 365 residues long: tRNA/tmRNA (uracil-C(5))-methyltransferase (365 aa).

Gln189, Tyr217, Asn222, Glu238, and Asp298 together coordinate S-adenosyl-L-methionine. The active-site Nucleophile is Cys323. Catalysis depends on Glu357, which acts as the Proton acceptor.

Belongs to the class I-like SAM-binding methyltransferase superfamily. RNA M5U methyltransferase family. TrmA subfamily.

It catalyses the reaction uridine(54) in tRNA + S-adenosyl-L-methionine = 5-methyluridine(54) in tRNA + S-adenosyl-L-homocysteine + H(+). The catalysed reaction is uridine(341) in tmRNA + S-adenosyl-L-methionine = 5-methyluridine(341) in tmRNA + S-adenosyl-L-homocysteine + H(+). Functionally, dual-specificity methyltransferase that catalyzes the formation of 5-methyluridine at position 54 (m5U54) in all tRNAs, and that of position 341 (m5U341) in tmRNA (transfer-mRNA). The protein is tRNA/tmRNA (uracil-C(5))-methyltransferase of Psychromonas ingrahamii (strain DSM 17664 / CCUG 51855 / 37).